The following is a 1107-amino-acid chain: DNA-directed RNA polymerase subunit beta (1107 aa).

Over residues 1062 to 1075 (DNEGNEKEKARELG) the composition is skewed to basic and acidic residues. Residues 1062 to 1081 (DNEGNEKEKARELGLDLPDN) form a disordered region.

The protein belongs to the RNA polymerase beta chain family. The RNAP catalytic core consists of 2 alpha, 1 beta, 1 beta' and 1 omega subunit. When a sigma factor is associated with the core the holoenzyme is formed, which can initiate transcription.

The enzyme catalyses RNA(n) + a ribonucleoside 5'-triphosphate = RNA(n+1) + diphosphate. DNA-dependent RNA polymerase catalyzes the transcription of DNA into RNA using the four ribonucleoside triphosphates as substrates. The protein is DNA-directed RNA polymerase subunit beta of Syntrophomonas wolfei subsp. wolfei (strain DSM 2245B / Goettingen).